The chain runs to 193 residues: Putative manganese efflux pump MntP (193 aa).

6 helical membrane-spanning segments follow: residues 6-26, 39-59, 61-81, 106-126, 132-152, and 165-185; these read VVFV…GIAC, VAGT…YAGL, IADV…TVIG, LGLL…GLTF, NIGL…YLGF, and WVGI…LAEH.

Belongs to the MntP (TC 9.B.29) family.

The protein localises to the cell membrane. Probably functions as a manganese efflux pump. This chain is Putative manganese efflux pump MntP, found in Dehalococcoides mccartyi (strain ATCC BAA-2266 / KCTC 15142 / 195) (Dehalococcoides ethenogenes (strain 195)).